Here is a 370-residue protein sequence, read N- to C-terminus: Cobalt-precorrin-5B C(1)-methyltransferase (370 aa).

It belongs to the CbiD family.

The catalysed reaction is Co-precorrin-5B + S-adenosyl-L-methionine = Co-precorrin-6A + S-adenosyl-L-homocysteine. It participates in cofactor biosynthesis; adenosylcobalamin biosynthesis; cob(II)yrinate a,c-diamide from sirohydrochlorin (anaerobic route): step 6/10. Its function is as follows. Catalyzes the methylation of C-1 in cobalt-precorrin-5B to form cobalt-precorrin-6A. The sequence is that of Cobalt-precorrin-5B C(1)-methyltransferase from Nostoc sp. (strain PCC 7120 / SAG 25.82 / UTEX 2576).